Consider the following 511-residue polypeptide: MDFFSTSSLSSYYHLIFTILAFVISSIIYFLSKKAESKKLKLPPGPPGWPVVGNLLQVARSGKPFFQIMRELRQKYGPIFTLRMGTRTMIILSNADLVHEALILKGQVFATRPRENPTRTVFSCDKFTVNAAVYGPVWRSLRKNMVQNGLSSIRLKEFRAVRKSAMDKMIEKIRAEADANEGVVWVLKNARFAVFCILLAMCFGVEMDEKTIEKIDQMMKSVLIALDPRLDDYLPILSPFFSKQRKHAMDVRKQQIKTIVPFIEQRKKILESPEIDKTAASFSYLDTLFDLKIEGRNSTPTYPELVTLCSEFLNGGTDTTATAIEWAIGRLIENPNIQSQLYEEIKKTVGENKIDEKDIEKMPYLNAVVKELLRKHPPTYMSLTHAVTEPAKLGGYDIPTGVNVEIFLPGISDDPNLWSEPEKFDPDRFYLGKEDADITGVSGVKMIPFGMGRRICPGLNMATVHVSLMLARLVQEFEWADPENTRVDFTEKLEFTVVMKNTLRAKIKPRM.

Cysteine 456 is a binding site for heme.

It belongs to the cytochrome P450 family. Heme is required as a cofactor.

In Solanum melongena (Eggplant), this protein is Cytochrome P450 77A2 (CYP77A2).